Reading from the N-terminus, the 133-residue chain is Egg protein CP422 (133 aa).

The first 21 residues, 1–21 (MHECMIVFFIFAVVSIYYADA), serve as a signal peptide directing secretion. Intrachain disulfides connect C107-C121, C114-C125, and C120-C130.

It is found in the secreted. In Schistosoma japonicum (Blood fluke), this protein is Egg protein CP422 (CP422).